The following is a 182-amino-acid chain: MASELDGLPVIATRREEAEGFLQGLVSKSLGWARKYSLFTYPFVTACCGMEYMTMASARYDSDRFGAAMPRFSPRQADLLMVVGTVNCKQAPILQRIYEQMADPKWVMAFGVCASSGGFYDNYATVQGIDRIIPVDVYVPGCPPRPEQVLDGIMLLQKKIQNQSHKLIDRKPLPVIAGGPGR.

[4Fe-4S] cluster is bound by residues C47, C48, C113, and C142.

This sequence belongs to the complex I 20 kDa subunit family. In terms of assembly, NDH-1 is composed of 14 different subunits. Subunits NuoB, C, D, E, F, and G constitute the peripheral sector of the complex. [4Fe-4S] cluster serves as cofactor.

It is found in the cell inner membrane. It catalyses the reaction a quinone + NADH + 5 H(+)(in) = a quinol + NAD(+) + 4 H(+)(out). Its function is as follows. NDH-1 shuttles electrons from NADH, via FMN and iron-sulfur (Fe-S) centers, to quinones in the respiratory chain. Couples the redox reaction to proton translocation (for every two electrons transferred, four hydrogen ions are translocated across the cytoplasmic membrane), and thus conserves the redox energy in a proton gradient. This Anaeromyxobacter dehalogenans (strain 2CP-C) protein is NADH-quinone oxidoreductase subunit B 1.